Here is a 476-residue protein sequence, read N- to C-terminus: Angiotensinogen (476 aa).

Positions 1–24 (MAPAGMSLRATILCLLAWAGLAAG) are cleaved as a signal peptide. N-linked (GlcNAc...) asparagine glycans are attached at residues N38, N161, N295, and N319. C42 and C162 form a disulfide bridge.

Belongs to the serpin family. In response to low blood pressure, the enzyme renin/REN cleaves angiotensinogen to produce angiotensin-1. Angiotensin-1 is a substrate of ACE (angiotensin converting enzyme) that removes a dipeptide to yield the physiologically active peptide angiotensin-2. Angiotensin-1 and angiotensin-2 can be further processed to generate angiotensin-3, angiotensin-4. Angiotensin 1-9 is cleaved from angiotensin-1 by ACE2 and can be further processed by ACE to produce angiotensin 1-7, angiotensin 1-5 and angiotensin 1-4. Angiotensin 1-7 has also been proposed to be cleaved from angiotensin-2 by ACE2 or from angiotensin-1 by MME (neprilysin). Post-translationally, the disulfide bond is labile. Angiotensinogen is present in the circulation in a near 40:60 ratio with the oxidized disulfide-bonded form, which preferentially interacts with receptor-bound renin.

The protein resides in the secreted. Its function is as follows. Essential component of the renin-angiotensin system (RAS), a potent regulator of blood pressure, body fluid and electrolyte homeostasis. Functionally, acts directly on vascular smooth muscle as a potent vasoconstrictor, affects cardiac contractility and heart rate through its action on the sympathetic nervous system, and alters renal sodium and water absorption through its ability to stimulate the zona glomerulosa cells of the adrenal cortex to synthesize and secrete aldosterone. Acts by binding to angiotensin receptors AGTR1 and AGTR2. Also binds the DEAR/FBXW7-AS1 receptor. In terms of biological role, stimulates aldosterone release. Is a ligand for the G-protein coupled receptor MAS1. Has vasodilator and antidiuretic effects. Has an antithrombotic effect that involves MAS1-mediated release of nitric oxide from platelets. The sequence is that of Angiotensinogen (AGT) from Gorilla gorilla gorilla (Western lowland gorilla).